A 611-amino-acid chain; its full sequence is Leukotriene A-4 hydrolase (611 aa).

Residue K73 is modified to N6-acetyllysine. Residues 135–137 (QCQ) and 267–272 (PYGGME) contribute to the a peptide site. Residue H296 participates in Zn(2+) binding. The Proton acceptor role is filled by E297. Residues H300 and E319 each contribute to the Zn(2+) site. Position 337 is an N6-acetyllysine (K337). Y384 serves as the catalytic Proton donor. K414 is subject to N6-acetyllysine. S416 bears the Phosphoserine mark. 564–566 (RMK) is an a peptide binding site. The residue at position 573 (K573) is an N6-acetyllysine.

This sequence belongs to the peptidase M1 family. In terms of assembly, monomer. The cofactor is Zn(2+). In terms of processing, phosphorylation at Ser-416 inhibits leukotriene-A4 hydrolase activity. As to expression, isoform 1 and isoform 2 are expressed in monocytes, lymphocytes, neutrophils, reticulocytes, platelets and fibroblasts.

The protein resides in the cytoplasm. The catalysed reaction is leukotriene A4 + H2O = leukotriene B4. The enzyme catalyses (5S,6S)-epoxy-(18R)-hydroxy-(7E,9E,11Z,14Z,16E)-eicosapentaenoate + H2O = resolvin E1. It catalyses the reaction (5S,6S)-epoxy-(18S)-hydroxy-(7E,9E,11Z,14Z,16E)-eicosapentaenoate + H2O = 18S-resolvin E1. It carries out the reaction Release of the N-terminal residue from a tripeptide.. The protein operates within lipid metabolism; leukotriene B4 biosynthesis. Inhibited by bestatin. The epoxide hydrolase activity is restrained by suicide inactivation that involves binding of LTA4 to Tyr-379. 4-(4-benzylphenyl)thiazol-2-amine (ARM1) selectively inhibits the epoxide hydrolase activity. In terms of biological role, bifunctional zinc metalloenzyme that comprises both epoxide hydrolase (EH) and aminopeptidase activities. Acts as an epoxide hydrolase to catalyze the conversion of LTA4 to the pro-inflammatory mediator leukotriene B4 (LTB4). Also has aminopeptidase activity, with high affinity for N-terminal arginines of various synthetic tripeptides. In addition to its pro-inflammatory EH activity, may also counteract inflammation by its aminopeptidase activity, which inactivates by cleavage another neutrophil attractant, the tripeptide Pro-Gly-Pro (PGP), a bioactive fragment of collagen generated by the action of matrix metalloproteinase-9 (MMP9) and prolylendopeptidase (PREPL). Involved also in the biosynthesis of resolvin E1 and 18S-resolvin E1 from eicosapentaenoic acid, two lipid mediators that show potent anti-inflammatory and pro-resolving actions. This chain is Leukotriene A-4 hydrolase (LTA4H), found in Homo sapiens (Human).